The chain runs to 328 residues: Phosphate acyltransferase (328 aa).

This sequence belongs to the PlsX family. Homodimer. Probably interacts with PlsY.

The protein localises to the cytoplasm. The catalysed reaction is a fatty acyl-[ACP] + phosphate = an acyl phosphate + holo-[ACP]. Its pathway is lipid metabolism; phospholipid metabolism. Its function is as follows. Catalyzes the reversible formation of acyl-phosphate (acyl-PO(4)) from acyl-[acyl-carrier-protein] (acyl-ACP). This enzyme utilizes acyl-ACP as fatty acyl donor, but not acyl-CoA. This chain is Phosphate acyltransferase, found in Staphylococcus aureus (strain bovine RF122 / ET3-1).